Reading from the N-terminus, the 207-residue chain is Putative 3-methyladenine DNA glycosylase (207 aa).

This sequence belongs to the DNA glycosylase MPG family.

The chain is Putative 3-methyladenine DNA glycosylase from Listeria monocytogenes serotype 4a (strain HCC23).